The following is a 544-amino-acid chain: Probable protein kinase UbiB (544 aa).

One can recognise a Protein kinase domain in the interval 123 to 501; sequence EFDIKPLASA…KRQQATGKFL (379 aa). Residues 129–137 and Lys-152 each bind ATP; that span reads LASASIAQV. The Proton acceptor role is filled by Asp-287. The next 2 membrane-spanning stretches (helical) occupy residues 496 to 516 and 519 to 539; these read ATGK…AILV and AYEQ…LLSW.

It belongs to the ABC1 family. UbiB subfamily.

The protein localises to the cell inner membrane. Its pathway is cofactor biosynthesis; ubiquinone biosynthesis [regulation]. In terms of biological role, is probably a protein kinase regulator of UbiI activity which is involved in aerobic coenzyme Q (ubiquinone) biosynthesis. This Vibrio campbellii (strain ATCC BAA-1116) protein is Probable protein kinase UbiB.